Reading from the N-terminus, the 80-residue chain is Putative membrane protein insertion efficiency factor (80 aa).

Belongs to the UPF0161 family.

The protein resides in the cell inner membrane. In terms of biological role, could be involved in insertion of integral membrane proteins into the membrane. This Syntrophobacter fumaroxidans (strain DSM 10017 / MPOB) protein is Putative membrane protein insertion efficiency factor.